The primary structure comprises 86 residues: Small ribosomal subunit protein uS17 (86 aa).

It belongs to the universal ribosomal protein uS17 family. In terms of assembly, part of the 30S ribosomal subunit.

Functionally, one of the primary rRNA binding proteins, it binds specifically to the 5'-end of 16S ribosomal RNA. This chain is Small ribosomal subunit protein uS17, found in Streptococcus gordonii (strain Challis / ATCC 35105 / BCRC 15272 / CH1 / DL1 / V288).